We begin with the raw amino-acid sequence, 64 residues long: Large ribosomal subunit protein bL33 (64 aa).

The span at 16–25 (EARTSSEPRR) shows a compositional bias: basic and acidic residues. The interval 16 to 41 (EARTSSEPRRSNGVSRYTTEKNKRNT) is disordered.

This sequence belongs to the bacterial ribosomal protein bL33 family.

This is Large ribosomal subunit protein bL33 from Prochlorococcus marinus subsp. pastoris (strain CCMP1986 / NIES-2087 / MED4).